Reading from the N-terminus, the 65-residue chain is Large ribosomal subunit protein bL35 (65 aa).

Belongs to the bacterial ribosomal protein bL35 family.

This chain is Large ribosomal subunit protein bL35, found in Nitrosomonas eutropha (strain DSM 101675 / C91 / Nm57).